A 500-amino-acid chain; its full sequence is ERAD-associated E3 ubiquitin-protein ligase HRD1 (500 aa).

Residues 1-3 (MIR) lie on the Cytoplasmic side of the membrane. The helical transmembrane segment at 4-24 (LQTYAAFSLMATATAVYYAFS) threads the bilayer. Residues 25–40 (SREQFYPAMVYLSTSK) lie on the Lumenal side of the membrane. The helical transmembrane segment at 41–61 (ICFVLLLNTGLVAMCVAWQLV) threads the bilayer. Topologically, residues 62–98 (KRLFLGTLREAEVERLNEQAWREVVEILFAVTIFRQD) are cytoplasmic. The chain crosses the membrane as a helical span at residues 99 to 119 (FSVSFLAMVAALLLVKALHWL). The Lumenal segment spans residues 120–135 (AQKRVEYIETTPSVPM). The helical transmembrane segment at 136 to 156 (LSHARIVSFMLFLLVVDCLFL) threads the bilayer. Topologically, residues 157–170 (SNSLRSLIHKREAS) are cytoplasmic. The chain crosses the membrane as a helical span at residues 171–191 (VAIFFSFEYMILATSTVSTFV). The Lumenal portion of the chain corresponds to 192-225 (KYIFYVSDMLMEGQWEKKAVYTFYLELISDLVHL). The helical transmembrane segment at 226–246 (SLYMLFFIAIFLNYGVPLHLI) threads the bilayer. Residues 247-500 (RELYETFRNF…NENGEHTKSD (254 aa)) lie on the Cytoplasmic side of the membrane. The segment at 292–330 (CIICREEMTTAKKLLCGHLFHVHCLRSWLERQHTCPTCR) adopts an RING-type; atypical zinc-finger fold. Disordered regions lie at residues 337–375 (DNGR…SRRQ) and 398–438 (NNLN…SAPT). Over residues 348-358 (VHPGVQPVPGN) the composition is skewed to low complexity. Over residues 398–426 (NNLNRYSTPPQSTSNGPQSGEASTSNQSP) the composition is skewed to polar residues.

Belongs to the HRD1 family.

The protein localises to the endoplasmic reticulum membrane. The enzyme catalyses S-ubiquitinyl-[E2 ubiquitin-conjugating enzyme]-L-cysteine + [acceptor protein]-L-lysine = [E2 ubiquitin-conjugating enzyme]-L-cysteine + N(6)-ubiquitinyl-[acceptor protein]-L-lysine.. It participates in protein modification; protein ubiquitination. Functionally, probable component of the HRD1 ubiquitin ligase complex that mediates the rapid degradation of misfolded endoplasmic reticulum (ER) proteins, a process called ER-associated degradation (ERAD). The chain is ERAD-associated E3 ubiquitin-protein ligase HRD1 from Oryza sativa subsp. japonica (Rice).